Consider the following 87-residue polypeptide: Small ribosomal subunit protein eS21B (87 aa).

Residue Met1 is modified to N-acetylmethionine.

The protein belongs to the eukaryotic ribosomal protein eS21 family. As to quaternary structure, component of the small ribosomal subunit (SSU). Mature yeast ribosomes consist of a small (40S) and a large (60S) subunit. The 40S small subunit contains 1 molecule of ribosomal RNA (18S rRNA) and 33 different proteins (encoded by 57 genes). The large 60S subunit contains 3 rRNA molecules (25S, 5.8S and 5S rRNA) and 46 different proteins (encoded by 81 genes). Post-translationally, N-terminally acetylated by acetyltransferase NatB.

Its subcellular location is the cytoplasm. Component of the ribosome, a large ribonucleoprotein complex responsible for the synthesis of proteins in the cell. The small ribosomal subunit (SSU) binds messenger RNAs (mRNAs) and translates the encoded message by selecting cognate aminoacyl-transfer RNA (tRNA) molecules. The large subunit (LSU) contains the ribosomal catalytic site termed the peptidyl transferase center (PTC), which catalyzes the formation of peptide bonds, thereby polymerizing the amino acids delivered by tRNAs into a polypeptide chain. The nascent polypeptides leave the ribosome through a tunnel in the LSU and interact with protein factors that function in enzymatic processing, targeting, and the membrane insertion of nascent chains at the exit of the ribosomal tunnel. eS21 is required for the processing of the 20S rRNA-precursor to mature 18S rRNA in a late step of the maturation of 40S ribosomal subunits. Has a physiological role leading to 18S rRNA stability. This chain is Small ribosomal subunit protein eS21B, found in Saccharomyces cerevisiae (strain ATCC 204508 / S288c) (Baker's yeast).